The sequence spans 368 residues: Peptide chain release factor 2 (368 aa).

At Gln-249 the chain carries N5-methylglutamine.

This sequence belongs to the prokaryotic/mitochondrial release factor family. In terms of processing, methylated by PrmC. Methylation increases the termination efficiency of RF2.

Its subcellular location is the cytoplasm. Peptide chain release factor 2 directs the termination of translation in response to the peptide chain termination codons UGA and UAA. The sequence is that of Peptide chain release factor 2 from Rhodococcus erythropolis (strain PR4 / NBRC 100887).